The sequence spans 367 residues: Adenine deaminase (367 aa).

Residues His-19, His-21, and His-209 each coordinate Zn(2+). The active-site Proton donor is Glu-212. Asp-290 is a binding site for Zn(2+). Asp-291 is a binding site for substrate.

Belongs to the metallo-dependent hydrolases superfamily. Adenosine and AMP deaminases family. Adenine deaminase type 2 subfamily. Zn(2+) serves as cofactor.

Its subcellular location is the cytoplasm. The protein resides in the nucleus. It carries out the reaction adenine + H2O + H(+) = hypoxanthine + NH4(+). Functionally, catalyzes the hydrolytic deamination of adenine to hypoxanthine. Plays an important role in the purine salvage pathway and in nitrogen catabolism. Also exhibits a low activity towards N(6)-substituted adenines that are commonly known as the plant hormones cytokinins. This is Adenine deaminase from Schizosaccharomyces pombe (strain 972 / ATCC 24843) (Fission yeast).